Consider the following 28-residue polypeptide: Beta-bungarotoxin B chain-like (28 aa).

The signal sequence occupies residues 1 to 24 (MSSGGLLLLLGLLTLCAELTPVSS).

As to quaternary structure, heterodimer; disulfide-linked. The A chains have phospholipase A2 activity and the B chains show homology with the basic protease inhibitors. Expressed by the venom gland.

The protein resides in the secreted. In terms of biological role, beta-1-bungarotoxin is a presynaptic neurotoxin of the venom. The B chain is homologous to venom basic protease inhibitors but has no protease inhibitor activity and blocks voltage-gated potassium channels (Kv). The sequence is that of Beta-bungarotoxin B chain-like from Bungarus multicinctus (Many-banded krait).